Consider the following 231-residue polypeptide: Uroporphyrinogen-III C-methyltransferase (231 aa).

S-adenosyl-L-homocysteine-binding positions include P10, G85–D87, T115–S116, M166, and A218.

It belongs to the precorrin methyltransferase family. Homodimer.

The catalysed reaction is uroporphyrinogen III + 2 S-adenosyl-L-methionine = precorrin-2 + 2 S-adenosyl-L-homocysteine + H(+). It catalyses the reaction uroporphyrinogen III + S-adenosyl-L-methionine = precorrin-1 + S-adenosyl-L-homocysteine + H(+). It carries out the reaction precorrin-1 + S-adenosyl-L-methionine = precorrin-2 + S-adenosyl-L-homocysteine. Its pathway is cofactor biosynthesis; adenosylcobalamin biosynthesis; precorrin-2 from uroporphyrinogen III: step 1/1. Its activity is regulated as follows. Does not show substrate inhibition at uroporphyrinogen III concentrations of up to 20 uM, in contrast to SUMT from Sinorhizobium (previously believed to be P.denitrificans). Its function is as follows. Catalyzes the two successive C-2 and C-7 methylation reactions involved in the conversion of uroporphyrinogen III to precorrin-2 via the intermediate formation of precorrin-1. It is a step in the biosynthesis of both cobalamin (vitamin B12) and coenzyme F430. This is Uroporphyrinogen-III C-methyltransferase (cobA) from Methanobacterium ivanovii.